The sequence spans 380 residues: Cytochrome b (380 aa).

The next 4 helical transmembrane spans lie at 34 to 54 (FGSLLAMCLATQILTGLLLAM), 78 to 99 (WLIRNLHANGASFFFICIFLHI), 114 to 134 (WNTGVILLLTLMATAFVGYVL), and 179 to 199 (FFALHFLLPFVIAGITIIHLI). 2 residues coordinate heme b: His-84 and His-98. 2 residues coordinate heme b: His-183 and His-197. His-202 is an a ubiquinone binding site. Helical transmembrane passes span 227 to 247 (LKDILGLTLMLTPLLTLALFS), 289 to 309 (LGGVLALAASVLILLLIPFLH), 321 to 341 (LSQTLFWLLVANLLVLTWVGS), and 348 to 368 (FIIIGQMASFSYFTILLILFP).

It belongs to the cytochrome b family. In terms of assembly, the cytochrome bc1 complex contains 11 subunits: 3 respiratory subunits (MT-CYB, CYC1 and UQCRFS1), 2 core proteins (UQCRC1 and UQCRC2) and 6 low-molecular weight proteins (UQCRH/QCR6, UQCRB/QCR7, UQCRQ/QCR8, UQCR10/QCR9, UQCR11/QCR10 and a cleavage product of UQCRFS1). This cytochrome bc1 complex then forms a dimer. Heme b is required as a cofactor.

The protein resides in the mitochondrion inner membrane. In terms of biological role, component of the ubiquinol-cytochrome c reductase complex (complex III or cytochrome b-c1 complex) that is part of the mitochondrial respiratory chain. The b-c1 complex mediates electron transfer from ubiquinol to cytochrome c. Contributes to the generation of a proton gradient across the mitochondrial membrane that is then used for ATP synthesis. In Tragopan temminckii (Temminck's tragopan), this protein is Cytochrome b (MT-CYB).